Consider the following 62-residue polypeptide: Metallothionein-4 (62 aa).

Residues Cys6, Cys8, Cys14, Cys16, Cys20, Cys22, Cys25, Cys27, Cys34, Cys35, Cys37, Cys38, Cys42, Cys45, Cys49, Cys51, Cys58, Cys60, and Cys61 each coordinate a divalent metal cation.

Belongs to the metallothionein superfamily. Type 1 family.

Its function is as follows. Seems to bind zinc and copper. Could play a special role in regulating zinc metabolism during the differentiation of stratified epithelia. This is Metallothionein-4 (MT4) from Homo sapiens (Human).